A 498-amino-acid polypeptide reads, in one-letter code: Interferon regulatory factor 5 (498 aa).

Residue Thr10 is modified to Phosphothreonine. The short motif at 12 to 18 is the Nuclear localization signal element; that stretch reads PRRVRLK. Positions 14–122 form a DNA-binding region, IRF tryptophan pentad repeat; the sequence is RVRLKPWLVA…QPYKIYEVCS (109 aa). Residues 121 to 207 form a disordered region; the sequence is CSNGPAPTDS…SPLAPPPGNP (87 aa). The Nuclear export signal signature appears at 150–160; sequence LQRMLPSLSLT. Residue Ser158 is modified to Phosphoserine; by TBK1. Residues 168–206 show a composition bias toward pro residues; sequence TLQPPTLRPPTLQPPTLQPPVVLGPPAPDPSPLAPPPGN. A Phosphoserine; by TBK1 modification is found at Ser293. A Phosphoserine modification is found at Ser301. Residues Lys411 and Lys412 each participate in a glycyl lysine isopeptide (Lys-Gly) (interchain with G-Cter in ubiquitin) cross-link. Residues Ser431, Ser435, Ser437, and Ser440 each carry the phosphoserine modification. Ser446 is subject to Phosphoserine; by IKKB. The disordered stretch occupies residues 478-498; it reads PPGAGLGVGQGPWPMHPAGMQ.

The protein belongs to the IRF family. As to quaternary structure, homodimer, when phosphorylated. Interacts with TASL (via pLxIS motif); interaction takes place downstream of TLR7, TLR8 or TLR9, leading to its activation. Interacts with MYD88 and TRAF6. In terms of processing, phosphorylation of serine and threonine residues by IKBKB in a C-terminal autoinhibitory region, stimulates dimerization, transport into the nucleus, assembly with the coactivator CBP/EP300 and initiation of transcription. 'Lys-63'-linked polyubiquitination by TRAF6 is required for activation.

The protein resides in the cytoplasm. The protein localises to the nucleus. Maintained as a monomer in an autoinhibited state. Phosphorylation and activation follow the following steps: innate adapter protein TASL recruits IRF5, thereby licensing IRF5 for phosphorylation by IKBKB. Phosphorylated IRF5 dissociates from the adapter proteins, dimerizes, and then enters the nucleus to induce IFNs. Its activity is regulated as follows. (Microbial infection) Activated upon coronavirus SARS-CoV-2 infection. In terms of biological role, transcription factor that plays a critical role in innate immunity by activating expression of type I interferon (IFN) IFNA and INFB and inflammatory cytokines downstream of endolysosomal toll-like receptors TLR7, TLR8 and TLR9. Regulates the transcription of type I IFN genes (IFN-alpha and IFN-beta) and IFN-stimulated genes (ISG) by binding to an interferon-stimulated response element (ISRE) in their promoters. Can efficiently activate both the IFN-beta (IFNB) and the IFN-alpha (IFNA) genes and mediate their induction downstream of the TLR-activated, MyD88-dependent pathway. Key transcription factor regulating the IFN response during SARS-CoV-2 infection. This chain is Interferon regulatory factor 5, found in Homo sapiens (Human).